Here is a 214-residue protein sequence, read N- to C-terminus: Octanoyltransferase (214 aa).

Positions 31 to 206 constitute a BPL/LPL catalytic domain; the sequence is KDDADEIWLL…QLAEQLGYNY (176 aa). Residues 70-77, 137-139, and 150-152 each bind substrate; these read RGGQVTYH, SLG, and GLA. The active-site Acyl-thioester intermediate is the cysteine 168.

It belongs to the LipB family.

The protein resides in the cytoplasm. It carries out the reaction octanoyl-[ACP] + L-lysyl-[protein] = N(6)-octanoyl-L-lysyl-[protein] + holo-[ACP] + H(+). The protein operates within protein modification; protein lipoylation via endogenous pathway; protein N(6)-(lipoyl)lysine from octanoyl-[acyl-carrier-protein]: step 1/2. Its function is as follows. Catalyzes the transfer of endogenously produced octanoic acid from octanoyl-acyl-carrier-protein onto the lipoyl domains of lipoate-dependent enzymes. Lipoyl-ACP can also act as a substrate although octanoyl-ACP is likely to be the physiological substrate. This Marinomonas sp. (strain MWYL1) protein is Octanoyltransferase.